The sequence spans 335 residues: D-arabinose 1-dehydrogenase (335 aa).

Tyr-58 (proton donor) is an active-site residue. Substrate is bound at residue His-124. 221-287 (SLLRSQETRQ…VSSMEELKLA (67 aa)) provides a ligand contact to NAD(+).

It belongs to the aldo/keto reductase family. Aldo/keto reductase 2 subfamily.

The enzyme catalyses D-arabinose + NAD(+) = D-arabinono-1,4-lactone + NADH + H(+). The polypeptide is D-arabinose 1-dehydrogenase (ARA2) (Saccharomyces cerevisiae (strain ATCC 204508 / S288c) (Baker's yeast)).